Here is a 148-residue protein sequence, read N- to C-terminus: HTH-type transcriptional regulator Ptr1 (148 aa).

The region spanning 2–63 (LDRIDLKILR…SINPKNLGFE (62 aa)) is the HTH asnC-type domain. Positions 21 to 40 (FREIGRELGISEGTVRNRVK) form a DNA-binding region, H-T-H motif.

As to quaternary structure, homodimer.

Participates in positive as well as negative regulation of transcription. Binds to its own promoter. The chain is HTH-type transcriptional regulator Ptr1 (ptr1) from Methanocaldococcus jannaschii (strain ATCC 43067 / DSM 2661 / JAL-1 / JCM 10045 / NBRC 100440) (Methanococcus jannaschii).